Consider the following 203-residue polypeptide: Glycerol-3-phosphate acyltransferase (203 aa).

A run of 5 helical transmembrane segments spans residues 2 to 22 (LATLMFILAYLLGSISSAILV), 54 to 74 (CLVLIFDVLKGTIPVWGAYFL), 80 to 100 (ALGLVAVAACLGHMFPLFFGF), 114 to 134 (LPIGLSLAGLLICTWFIMVAI), and 153 to 173 (TWLIKPLYTLPVTFITVLIIF).

This sequence belongs to the PlsY family. Probably interacts with PlsX.

It is found in the cell inner membrane. The enzyme catalyses an acyl phosphate + sn-glycerol 3-phosphate = a 1-acyl-sn-glycero-3-phosphate + phosphate. It participates in lipid metabolism; phospholipid metabolism. Its function is as follows. Catalyzes the transfer of an acyl group from acyl-phosphate (acyl-PO(4)) to glycerol-3-phosphate (G3P) to form lysophosphatidic acid (LPA). This enzyme utilizes acyl-phosphate as fatty acyl donor, but not acyl-CoA or acyl-ACP. This Pseudoalteromonas translucida (strain TAC 125) protein is Glycerol-3-phosphate acyltransferase.